The chain runs to 823 residues: Transcription factor SPT20 homolog-like 1 (823 aa).

Disordered regions lie at residues 246-273, 369-524, 560-601, 631-669, and 720-757; these read SVKP…KEER, PRKK…AAQP, GSSF…AVQA, VLTG…LGLS, and LRQQ…PQHI. Positions 423 to 440 are enriched in polar residues; the sequence is SHSSSGPASVSQLSSWKT. 3 stretches are compositionally biased toward low complexity: residues 469-509, 568-582, and 636-650; these read SSSG…QKPS, APGS…ISGS, and QQQS…QLQQ.

The protein belongs to the SPT20 family.

This is Transcription factor SPT20 homolog-like 1 (SUPT20HL1) from Homo sapiens (Human).